A 104-amino-acid polypeptide reads, in one-letter code: NADH-quinone oxidoreductase subunit K (104 aa).

The next 3 helical transmembrane spans lie at 4–24 (VPAS…LFGA), 31–51 (VIVL…LVAF), and 67–87 (LFTM…LIAL).

The protein belongs to the complex I subunit 4L family. As to quaternary structure, NDH-1 is composed of 14 different subunits. Subunits NuoA, H, J, K, L, M, N constitute the membrane sector of the complex.

It localises to the cell membrane. The catalysed reaction is a quinone + NADH + 5 H(+)(in) = a quinol + NAD(+) + 4 H(+)(out). In terms of biological role, NDH-1 shuttles electrons from NADH, via FMN and iron-sulfur (Fe-S) centers, to quinones in the respiratory chain. The immediate electron acceptor for the enzyme in this species is believed to be a menaquinone. Couples the redox reaction to proton translocation (for every two electrons transferred, four hydrogen ions are translocated across the cytoplasmic membrane), and thus conserves the redox energy in a proton gradient. This Bacillus cereus (strain ATCC 14579 / DSM 31 / CCUG 7414 / JCM 2152 / NBRC 15305 / NCIMB 9373 / NCTC 2599 / NRRL B-3711) protein is NADH-quinone oxidoreductase subunit K.